A 109-amino-acid chain; its full sequence is uncharacterized protein (109 aa).

The helical transmembrane segment at 75 to 95 threads the bilayer; the sequence is LHFFFLFWLLNFILFFRIHLY.

The protein localises to the membrane. This is an uncharacterized protein from Schizosaccharomyces pombe (strain 972 / ATCC 24843) (Fission yeast).